Reading from the N-terminus, the 361-residue chain is tRNA/tmRNA (uracil-C(5))-methyltransferase (361 aa).

S-adenosyl-L-methionine-binding residues include Gln183, Tyr211, Asn216, Glu232, and Asp294. Cys319 functions as the Nucleophile in the catalytic mechanism. Glu353 (proton acceptor) is an active-site residue.

It belongs to the class I-like SAM-binding methyltransferase superfamily. RNA M5U methyltransferase family. TrmA subfamily.

It catalyses the reaction uridine(54) in tRNA + S-adenosyl-L-methionine = 5-methyluridine(54) in tRNA + S-adenosyl-L-homocysteine + H(+). The enzyme catalyses uridine(341) in tmRNA + S-adenosyl-L-methionine = 5-methyluridine(341) in tmRNA + S-adenosyl-L-homocysteine + H(+). Dual-specificity methyltransferase that catalyzes the formation of 5-methyluridine at position 54 (m5U54) in all tRNAs, and that of position 341 (m5U341) in tmRNA (transfer-mRNA). The protein is tRNA/tmRNA (uracil-C(5))-methyltransferase of Acinetobacter baumannii (strain AYE).